Here is a 193-residue protein sequence, read N- to C-terminus: Putative nucleotidase YqfW (193 aa).

Belongs to the 5'(3')-deoxyribonucleotidase family.

The chain is Putative nucleotidase YqfW (yqfW) from Bacillus subtilis (strain 168).